A 452-amino-acid polypeptide reads, in one-letter code: 23S rRNA (uracil(1939)-C(5))-methyltransferase RlmD (452 aa).

Residues Met-1–Ile-23 are disordered. The region spanning Gln-22–Arg-80 is the TRAM domain. Residues Cys-93, Cys-99, Cys-102, and Cys-181 each coordinate [4Fe-4S] cluster. Residues Gln-285, Phe-314, Asn-319, Glu-335, Asp-362, and Asp-383 each coordinate S-adenosyl-L-methionine. The Nucleophile role is filled by Cys-409.

This sequence belongs to the class I-like SAM-binding methyltransferase superfamily. RNA M5U methyltransferase family. RlmD subfamily.

It catalyses the reaction uridine(1939) in 23S rRNA + S-adenosyl-L-methionine = 5-methyluridine(1939) in 23S rRNA + S-adenosyl-L-homocysteine + H(+). Its function is as follows. Catalyzes the formation of 5-methyl-uridine at position 1939 (m5U1939) in 23S rRNA. The sequence is that of 23S rRNA (uracil(1939)-C(5))-methyltransferase RlmD from Pseudomonas entomophila (strain L48).